Reading from the N-terminus, the 563-residue chain is Eukaryotic translation initiation factor 3 subunit D-1 (563 aa).

Positions 98-167 (VQKPPHQRGR…GPPPKMRESS (70 aa)) are disordered. Residues 100–121 (KPPHQRGRFRNMRNSRSGRGRN) show a composition bias toward basic residues. Position 128 is a phosphothreonine (threonine 128). Residues 291–305 (EFDLLTVNETSVEPP) are RNA gate.

Belongs to the eIF-3 subunit D family. Component of the eukaryotic translation initiation factor 3 (eIF-3) complex. The eIF-3 complex interacts with pix.

Its subcellular location is the cytoplasm. In terms of biological role, mRNA cap-binding component of the eukaryotic translation initiation factor 3 (eIF-3) complex, which is involved in protein synthesis of a specialized repertoire of mRNAs and, together with other initiation factors, stimulates binding of mRNA and methionyl-tRNAi to the 40S ribosome. The eIF-3 complex specifically targets and initiates translation of a subset of mRNAs involved in cell proliferation. In the eIF-3 complex, eif3d specifically recognizes and binds the 7-methylguanosine cap of a subset of mRNAs. This chain is Eukaryotic translation initiation factor 3 subunit D-1, found in Drosophila virilis (Fruit fly).